Consider the following 52-residue polypeptide: Large ribosomal subunit protein bL33 (52 aa).

The protein belongs to the bacterial ribosomal protein bL33 family.

The sequence is that of Large ribosomal subunit protein bL33 from Anaeromyxobacter dehalogenans (strain 2CP-C).